The chain runs to 171 residues: MTVPRVVLVGPMGVGKSTVGALVAERLGCAYRDTDDDIVTAEGRTIADIFVDEGEPVFRAIEKRAVHTALAEHDGVLALGGGAILDADTRALLAGHRVVYLSMEVDEAVKRTGLNAARPLLAVNPRRQWRELMEARRHLYTEVARAVVATDGRGPEEVAQAVLDALELKEA.

ATP is bound at residue 13–18; sequence GVGKST. S17 lines the Mg(2+) pocket. Residues D35, R59, and G81 each contribute to the substrate site. R118 lines the ATP pocket. Substrate is bound at residue R136. An ATP-binding site is contributed by R153.

The protein belongs to the shikimate kinase family. In terms of assembly, monomer. Requires Mg(2+) as cofactor.

The protein localises to the cytoplasm. It carries out the reaction shikimate + ATP = 3-phosphoshikimate + ADP + H(+). It functions in the pathway metabolic intermediate biosynthesis; chorismate biosynthesis; chorismate from D-erythrose 4-phosphate and phosphoenolpyruvate: step 5/7. Catalyzes the specific phosphorylation of the 3-hydroxyl group of shikimic acid using ATP as a cosubstrate. In Streptomyces avermitilis (strain ATCC 31267 / DSM 46492 / JCM 5070 / NBRC 14893 / NCIMB 12804 / NRRL 8165 / MA-4680), this protein is Shikimate kinase.